We begin with the raw amino-acid sequence, 257 residues long: UPF0246 protein CLL_A2361 (257 aa).

The protein belongs to the UPF0246 family.

The chain is UPF0246 protein CLL_A2361 from Clostridium botulinum (strain Eklund 17B / Type B).